Here is a 440-residue protein sequence, read N- to C-terminus: Xylose isomerase (440 aa).

Catalysis depends on residues H99 and D102. E230, E266, H269, D294, D305, D307, and D337 together coordinate Mg(2+).

Belongs to the xylose isomerase family. Homotetramer. The cofactor is Mg(2+).

It is found in the cytoplasm. It catalyses the reaction alpha-D-xylose = alpha-D-xylulofuranose. This Halalkalibacterium halodurans (strain ATCC BAA-125 / DSM 18197 / FERM 7344 / JCM 9153 / C-125) (Bacillus halodurans) protein is Xylose isomerase.